Consider the following 300-residue polypeptide: MTAVVLDGVATASAVKSELAVRIRALREQGLVPGLGTLLVGDDPGSRAYVAGKHRDCAEVGIESIRVDLPADATEADVRLAIERLNSDPAVTGYIVQLPLPAGIDENAMLELIDPSKDADGLHPTNLGRLVLGVQGELTSPLPCTPAGIVEMLQRYEVPIAGQHVVVVGRGLTVGRPLGLLLTRKGLDATVTLTHSRTRDLEQEVRRADIVVAAVGVAHLIKPEWVKPGAAVLDVGITRVVDPETGKARLTGDVDPAVAEVAGHLSPNPRGVGPMTRAMLLANVVQAAERDARLAAELRG.

Residues 169-171 (GRG), Ser-196, and Ile-237 each bind NADP(+).

This sequence belongs to the tetrahydrofolate dehydrogenase/cyclohydrolase family. As to quaternary structure, homodimer.

It catalyses the reaction (6R)-5,10-methylene-5,6,7,8-tetrahydrofolate + NADP(+) = (6R)-5,10-methenyltetrahydrofolate + NADPH. The enzyme catalyses (6R)-5,10-methenyltetrahydrofolate + H2O = (6R)-10-formyltetrahydrofolate + H(+). It participates in one-carbon metabolism; tetrahydrofolate interconversion. In terms of biological role, catalyzes the oxidation of 5,10-methylenetetrahydrofolate to 5,10-methenyltetrahydrofolate and then the hydrolysis of 5,10-methenyltetrahydrofolate to 10-formyltetrahydrofolate. The polypeptide is Bifunctional protein FolD (Clavibacter michiganensis subsp. michiganensis (strain NCPPB 382)).